A 296-amino-acid chain; its full sequence is Outer surface protein B (296 aa).

The first 15 residues, 1–15 (MRLLIGFALALALIG), serve as a signal peptide directing secretion. Residue cysteine 16 is the site of N-palmitoyl cysteine attachment. Cysteine 16 carries S-diacylglycerol cysteine lipidation. The disordered stretch occupies residues 25-51 (GSQKENDLNLEDSSKKSHQNAKQDLPA). Residues 28 to 39 (KENDLNLEDSSK) show a composition bias toward basic and acidic residues.

It is found in the cell outer membrane. The sequence is that of Outer surface protein B (ospB) from Borreliella burgdorferi (strain ATCC 35210 / DSM 4680 / CIP 102532 / B31) (Borrelia burgdorferi).